Consider the following 354-residue polypeptide: Protein Wnt-8a (354 aa).

The N-terminal stretch at 1-19 is a signal peptide; sequence MGHLLMLWVAAGMCYPALG. Cys-54 and Cys-65 are disulfide-bonded. Residue Asn-103 is glycosylated (N-linked (GlcNAc...) asparagine). Cystine bridges form between Cys-104–Cys-112, Cys-114–Cys-132, Cys-180–Cys-194, Cys-182–Cys-189, Cys-259–Cys-297, Cys-275–Cys-290, Cys-294–Cys-336, Cys-312–Cys-327, Cys-314–Cys-324, and Cys-319–Cys-320. Ser-186 is lipidated: O-palmitoleoyl serine. N-linked (GlcNAc...) asparagine glycosylation occurs at Asn-262.

Belongs to the Wnt family. In terms of assembly, forms a soluble 1:1 complex with AFM; this prevents oligomerization and is required for prolonged biological activity. The complex with AFM may represent the physiological form in body fluids. Palmitoleoylation is required for efficient binding to frizzled receptors. Depalmitoleoylation leads to Wnt signaling pathway inhibition. In terms of processing, proteolytic processing by TIKI1 and TIKI2 promotes oxidation and formation of large disulfide-bond oligomers, leading to inactivation of WNT8A.

The protein localises to the secreted. Its subcellular location is the extracellular space. The protein resides in the extracellular matrix. Its function is as follows. Ligand for members of the frizzled family of seven transmembrane receptors. Plays a role in embryonic patterning. The protein is Protein Wnt-8a (Wnt8a) of Mus musculus (Mouse).